The primary structure comprises 459 residues: Argininosuccinate lyase (459 aa).

The protein belongs to the lyase 1 family. Argininosuccinate lyase subfamily.

Its subcellular location is the cytoplasm. The enzyme catalyses 2-(N(omega)-L-arginino)succinate = fumarate + L-arginine. It participates in amino-acid biosynthesis; L-arginine biosynthesis; L-arginine from L-ornithine and carbamoyl phosphate: step 3/3. The polypeptide is Argininosuccinate lyase (Methylobacterium radiotolerans (strain ATCC 27329 / DSM 1819 / JCM 2831 / NBRC 15690 / NCIMB 10815 / 0-1)).